The sequence spans 71 residues: Large ribosomal subunit protein bL31 (71 aa).

Residues Cys-16, Cys-18, Cys-37, and Cys-40 each contribute to the Zn(2+) site.

It belongs to the bacterial ribosomal protein bL31 family. Type A subfamily. As to quaternary structure, part of the 50S ribosomal subunit. Zn(2+) serves as cofactor.

Its function is as follows. Binds the 23S rRNA. This Marinomonas sp. (strain MWYL1) protein is Large ribosomal subunit protein bL31.